The following is a 373-amino-acid chain: GTPase Obg (373 aa).

Residues 1 to 158 enclose the Obg domain; sequence MFVDSVELLI…KQVRLEMKLI (158 aa). Residues 62–83 form a disordered region; sequence NHIKAENGRPGEGRKKYGRKGQ. The segment covering 64 to 76 has biased composition (basic and acidic residues); it reads IKAENGRPGEGRK. One can recognise an OBG-type G domain in the interval 159 to 362; sequence ADVGLVGYPN…LRYALGDFVK (204 aa). Residues 165 to 172, 190 to 194, 212 to 215, 280 to 283, and 343 to 345 each bind GTP; these read GYPNVGKS, FTTLT, DIPG, TKID, and SSV. The Mg(2+) site is built by S172 and T192.

It belongs to the TRAFAC class OBG-HflX-like GTPase superfamily. OBG GTPase family. As to quaternary structure, monomer. It depends on Mg(2+) as a cofactor.

The protein localises to the cytoplasm. Functionally, an essential GTPase which binds GTP, GDP and possibly (p)ppGpp with moderate affinity, with high nucleotide exchange rates and a fairly low GTP hydrolysis rate. Plays a role in control of the cell cycle, stress response, ribosome biogenesis and in those bacteria that undergo differentiation, in morphogenesis control. The chain is GTPase Obg from Sulfurovum sp. (strain NBC37-1).